Reading from the N-terminus, the 374-residue chain is Chaperone protein DnaJ (374 aa).

A J domain is found at 5–70 (DYYEVLGVNR…RKRASYDQFG (66 aa)). A CR-type zinc finger spans residues 133-210 (GLSRTIKVPT…CHGQGRQQQT (78 aa)). Zn(2+) contacts are provided by C146, C149, C162, C165, C184, C187, C198, and C201. CXXCXGXG motif repeat units lie at residues 146-153 (CKTCNGSG), 162-169 (CPRCNGSG), 184-191 (CSVCRGRG), and 198-205 (CTDCHGQG).

This sequence belongs to the DnaJ family. Homodimer. The cofactor is Zn(2+).

The protein localises to the cytoplasm. Its function is as follows. Participates actively in the response to hyperosmotic and heat shock by preventing the aggregation of stress-denatured proteins and by disaggregating proteins, also in an autonomous, DnaK-independent fashion. Unfolded proteins bind initially to DnaJ; upon interaction with the DnaJ-bound protein, DnaK hydrolyzes its bound ATP, resulting in the formation of a stable complex. GrpE releases ADP from DnaK; ATP binding to DnaK triggers the release of the substrate protein, thus completing the reaction cycle. Several rounds of ATP-dependent interactions between DnaJ, DnaK and GrpE are required for fully efficient folding. Also involved, together with DnaK and GrpE, in the DNA replication of plasmids through activation of initiation proteins. The polypeptide is Chaperone protein DnaJ (Coxiella burnetii (strain CbuG_Q212) (Coxiella burnetii (strain Q212))).